Reading from the N-terminus, the 438-residue chain is Glucosamine kinase (438 aa).

Residues K133, 186–188, and D193 contribute to the ATP site; that span reads AYL. D300 provides a ligand contact to D-glucosamine. Positions 305, 317, and 319 each coordinate Mg(2+). Positions 405–420 match the Substrate specificity determinant motif motif; the sequence is QEVREYLYAVRHLPHW. E409 is a binding site for D-glucosamine.

It belongs to the actinobacterial glucosamine kinase family. As to quaternary structure, monomer. It depends on Mg(2+) as a cofactor.

It catalyses the reaction D-glucosamine + ATP = D-glucosamine 6-phosphate + ADP + H(+). Its function is as follows. Catalyzes the ATP-dependent phosphorylation of D-glucosamine (GlcN) to D-glucosamine 6-phosphate. May be involved in the phosphorylation of acquired extracellular GlcN derived from the hydrolysis of chitosan, i.e., in the incorporation of exogenous GlcN into the bacterial GlcNAc metabolism. To a lesser extent, is also active on glucose, but is unable to phosphorylate maltose, 18 other sugars and several aminoglycoside antibiotics. The sequence is that of Glucosamine kinase from Streptacidiphilus jiangxiensis.